Reading from the N-terminus, the 700-residue chain is Transketolase (700 aa).

T2 carries the post-translational modification N-acetylthreonine. Substrate is bound at residue H45. Residues T48, H85, 133–135 (GPL), and L135 each bind thiamine diphosphate. D177 contacts Mg(2+). G178 and N207 together coordinate thiamine diphosphate. Mg(2+)-binding residues include N207 and I209. Substrate is bound by residues H283, R378, and S405. Residue H283 participates in thiamine diphosphate binding. The active-site Proton donor is the E441. F467 is a thiamine diphosphate binding site. Substrate is bound by residues H491, D499, and R552.

Belongs to the transketolase family. In terms of assembly, homodimer. It depends on Mg(2+) as a cofactor. Ca(2+) is required as a cofactor. Requires Mn(2+) as cofactor. The cofactor is Co(2+). Thiamine diphosphate serves as cofactor.

It catalyses the reaction D-sedoheptulose 7-phosphate + D-glyceraldehyde 3-phosphate = aldehydo-D-ribose 5-phosphate + D-xylulose 5-phosphate. Catalyzes the reversible transfer of a two-carbon ketol group from sedoheptulose-7-phosphate to glyceraldehyde-3-phosphate, producing xylulose-5-phosphate and ribose-5-phosphate. Catalyzes the transfer of a two-carbon ketol group from a ketose donor to an aldose acceptor, via a covalent intermediate with the cofactor thiamine pyrophosphate. The protein is Transketolase (tkt) of Mycobacterium tuberculosis (strain ATCC 25618 / H37Rv).